The primary structure comprises 819 residues: Ent-beyerene synthase KSL2, chloroplastic (819 aa).

Residues 1-58 constitute a chloroplast transit peptide; that stretch reads MLPCLFPAYGSVVACKPSAIDRSPFGLLSQPKQTNRTLIRRPKVTKAFMAIEAMRHCS. The segment covering 58 to 76 has biased composition (low complexity); it reads SSSSSSEEGGAAATTAARS. The segment at 58–77 is disordered; it reads SSSSSSEEGGAAATTAARSA. 5 residues coordinate Mg(2+): aspartate 567, aspartate 571, asparagine 711, serine 715, and glutamate 719. Positions 567–571 match the DDXXD motif motif; it reads DDFFD.

It belongs to the terpene synthase family. Mg(2+) is required as a cofactor. In terms of tissue distribution, expressed in roots. Highly expressed in stems, flowers and panicle.

The protein resides in the plastid. It localises to the chloroplast. It catalyses the reaction ent-copalyl diphosphate = ent-beyerene + diphosphate. The enzyme catalyses ent-copalyl diphosphate = ent-kaur-16-ene + diphosphate. Its pathway is secondary metabolite biosynthesis; terpenoid biosynthesis. Diterpene cyclase involved in jasmonic acid-dependent defense mechanisms in roots by mediating the biosynthesis of labdane-related diterpenoids (LRDs) natural products such as ent-beyerene, an antimicrobial compound. Catalyzes the cyclization of ent-CDP into ent-beyerene as a major and ent-kaurene as a minor product. May be involved in the catalysis of an early step of the gibberellin (GA) biosynthesis pathway. In Oryza sativa subsp. japonica (Rice), this protein is Ent-beyerene synthase KSL2, chloroplastic.